Here is a 123-residue protein sequence, read N- to C-terminus: MMANHLVKPDSRNCKRARELEPQVSDSPQVSSLGKSESSLSEASGLFYKEEALEKDLSDMSKEINLMLSTYAKILSERAAVDASYIDEIDGLFKEANIIENFLVQKREFLKQRFTVITNTLHK.

The disordered stretch occupies residues 1 to 41 (MMANHLVKPDSRNCKRARELEPQVSDSPQVSSLGKSESSLS). Positions 7–21 (VKPDSRNCKRARELE) are enriched in basic and acidic residues. Low complexity predominate over residues 31-41 (SSLGKSESSLS).

Interacts with SYCE2. As to expression, testis (at protein level). Detected in ovary. Expressed in both male and female germ cells.

Its subcellular location is the chromosome. In terms of biological role, component of the transverse central element of synaptonemal complexes (SCS), formed between homologous chromosomes during meiotic prophase. Requires SYCP1 in order to be incorporated into the central element. This is Testis-expressed protein 12 (Tex12) from Mus musculus (Mouse).